Consider the following 89-residue polypeptide: Small ribosomal subunit protein uS15 (89 aa).

It belongs to the universal ribosomal protein uS15 family. Part of the 30S ribosomal subunit. Forms a bridge to the 50S subunit in the 70S ribosome, contacting the 23S rRNA.

Its function is as follows. One of the primary rRNA binding proteins, it binds directly to 16S rRNA where it helps nucleate assembly of the platform of the 30S subunit by binding and bridging several RNA helices of the 16S rRNA. In terms of biological role, forms an intersubunit bridge (bridge B4) with the 23S rRNA of the 50S subunit in the ribosome. The chain is Small ribosomal subunit protein uS15 from Nitrosococcus oceani (strain ATCC 19707 / BCRC 17464 / JCM 30415 / NCIMB 11848 / C-107).